The sequence spans 121 residues: Large ribosomal subunit protein bL19 (121 aa).

This sequence belongs to the bacterial ribosomal protein bL19 family.

This protein is located at the 30S-50S ribosomal subunit interface and may play a role in the structure and function of the aminoacyl-tRNA binding site. The sequence is that of Large ribosomal subunit protein bL19 (rplS) from Borreliella burgdorferi (strain ATCC 35210 / DSM 4680 / CIP 102532 / B31) (Borrelia burgdorferi).